We begin with the raw amino-acid sequence, 338 residues long: Nicotinate-nucleotide--dimethylbenzimidazole phosphoribosyltransferase (338 aa).

The active-site Proton acceptor is Glu-305.

The protein belongs to the CobT family.

The enzyme catalyses 5,6-dimethylbenzimidazole + nicotinate beta-D-ribonucleotide = alpha-ribazole 5'-phosphate + nicotinate + H(+). It functions in the pathway nucleoside biosynthesis; alpha-ribazole biosynthesis; alpha-ribazole from 5,6-dimethylbenzimidazole: step 1/2. Its function is as follows. Catalyzes the synthesis of alpha-ribazole-5'-phosphate from nicotinate mononucleotide (NAMN) and 5,6-dimethylbenzimidazole (DMB). This Sinorhizobium fredii (strain NBRC 101917 / NGR234) protein is Nicotinate-nucleotide--dimethylbenzimidazole phosphoribosyltransferase.